Reading from the N-terminus, the 311-residue chain is Acetyl-coenzyme A carboxylase carboxyl transferase subunit alpha (311 aa).

Residues 36–286 (KLEKEVEKTF…KEYFIKSLAE (251 aa)) form the CoA carboxyltransferase C-terminal domain.

Belongs to the AccA family. In terms of assembly, acetyl-CoA carboxylase is a heterohexamer composed of biotin carboxyl carrier protein (AccB), biotin carboxylase (AccC) and two subunits each of ACCase subunit alpha (AccA) and ACCase subunit beta (AccD).

It localises to the cytoplasm. The catalysed reaction is N(6)-carboxybiotinyl-L-lysyl-[protein] + acetyl-CoA = N(6)-biotinyl-L-lysyl-[protein] + malonyl-CoA. The protein operates within lipid metabolism; malonyl-CoA biosynthesis; malonyl-CoA from acetyl-CoA: step 1/1. Functionally, component of the acetyl coenzyme A carboxylase (ACC) complex. First, biotin carboxylase catalyzes the carboxylation of biotin on its carrier protein (BCCP) and then the CO(2) group is transferred by the carboxyltransferase to acetyl-CoA to form malonyl-CoA. The chain is Acetyl-coenzyme A carboxylase carboxyl transferase subunit alpha from Aliarcobacter butzleri (strain RM4018) (Arcobacter butzleri).